The chain runs to 93 residues: SH3 domain-binding glutamic acid-rich-like protein 3 (93 aa).

Ser-2 bears the N-acetylserine mark. Residues Ser-2–Ala-93 form the Glutaredoxin domain. Residue Thr-9 is glycosylated (O-linked (GalNAc...) threonine).

Belongs to the SH3BGR family. In terms of assembly, interacts with MYO1C (via its IQ motifs); the interaction is dependent on calcium and takes place at membrane ruffles. In terms of processing, may be glycosylated. In terms of tissue distribution, expressed in heart, liver, lung, kidney, spleen, thymus, ovarian follicles, skeletal muscle, brain, lymph node and mammary epithelial and stromal cells (at protein level).

Its subcellular location is the cytoplasm. It localises to the cytosol. It is found in the cell projection. The protein localises to the ruffle membrane. The protein resides in the nucleus. In terms of biological role, could act as a modulator of glutaredoxin biological activity. May play a role in cytoskeleton organization. The chain is SH3 domain-binding glutamic acid-rich-like protein 3 from Rattus norvegicus (Rat).